Reading from the N-terminus, the 410-residue chain is Bifunctional enzyme IspD/IspF (410 aa).

The tract at residues 1-257 is 2-C-methyl-D-erythritol 4-phosphate cytidylyltransferase; that stretch reads MSHDPVVPSA…AGAGSASSRL (257 aa). A 2-C-methyl-D-erythritol 2,4-cyclodiphosphate synthase region spans residues 258–410; sequence RSGIGTDVHA…AVATALVERL (153 aa). The a divalent metal cation site is built by Asp-264 and His-266. 4-CDP-2-C-methyl-D-erythritol 2-phosphate is bound by residues 264-266 and 290-291; these read DVH and HS. His-298 is a binding site for a divalent metal cation. Residues 312 to 314, 385 to 388, Phe-392, and Arg-395 each bind 4-CDP-2-C-methyl-D-erythritol 2-phosphate; these read DIG and TTTD.

It in the N-terminal section; belongs to the IspD/TarI cytidylyltransferase family. IspD subfamily. The protein in the C-terminal section; belongs to the IspF family. A divalent metal cation is required as a cofactor.

The catalysed reaction is 2-C-methyl-D-erythritol 4-phosphate + CTP + H(+) = 4-CDP-2-C-methyl-D-erythritol + diphosphate. It carries out the reaction 4-CDP-2-C-methyl-D-erythritol 2-phosphate = 2-C-methyl-D-erythritol 2,4-cyclic diphosphate + CMP. It participates in isoprenoid biosynthesis; isopentenyl diphosphate biosynthesis via DXP pathway; isopentenyl diphosphate from 1-deoxy-D-xylulose 5-phosphate: step 2/6. Its pathway is isoprenoid biosynthesis; isopentenyl diphosphate biosynthesis via DXP pathway; isopentenyl diphosphate from 1-deoxy-D-xylulose 5-phosphate: step 4/6. Functionally, bifunctional enzyme that catalyzes the formation of 4-diphosphocytidyl-2-C-methyl-D-erythritol from CTP and 2-C-methyl-D-erythritol 4-phosphate (MEP) (IspD), and catalyzes the conversion of 4-diphosphocytidyl-2-C-methyl-D-erythritol 2-phosphate (CDP-ME2P) to 2-C-methyl-D-erythritol 2,4-cyclodiphosphate (ME-CPP) with a corresponding release of cytidine 5-monophosphate (CMP) (IspF). The polypeptide is Bifunctional enzyme IspD/IspF (Clavibacter michiganensis subsp. michiganensis (strain NCPPB 382)).